The following is a 367-amino-acid chain: Deoxyhypusine synthase-like protein (367 aa).

Residues 1 to 23 (MKSLFQRRASKVRETEAMNAPVP) form a disordered region.

This sequence belongs to the deoxyhypusine synthase family.

This chain is Deoxyhypusine synthase-like protein, found in Caulobacter vibrioides (strain ATCC 19089 / CIP 103742 / CB 15) (Caulobacter crescentus).